We begin with the raw amino-acid sequence, 375 residues long: DNA replication and repair protein RecF (375 aa).

30–37 provides a ligand contact to ATP; sequence GDNAQGKT.

Belongs to the RecF family.

Its subcellular location is the cytoplasm. Functionally, the RecF protein is involved in DNA metabolism; it is required for DNA replication and normal SOS inducibility. RecF binds preferentially to single-stranded, linear DNA. It also seems to bind ATP. This chain is DNA replication and repair protein RecF, found in Symbiobacterium thermophilum (strain DSM 24528 / JCM 14929 / IAM 14863 / T).